Reading from the N-terminus, the 382-residue chain is Chaperone protein DnaJ (382 aa).

Residues 5–70 (DYYELLGVQK…EKRAAYDRYG (66 aa)) enclose the J domain. The CR-type zinc-finger motif lies at 146–224 (GAEKEISFRK…CHGEGRVRRT (79 aa)). Zn(2+) is bound by residues cysteine 159, cysteine 162, cysteine 176, cysteine 179, cysteine 198, cysteine 201, cysteine 212, and cysteine 215. 4 CXXCXGXG motif repeats span residues 159-166 (CERCDGSG), 176-183 (CPTCRGAG), 198-205 (CPTCGGMG), and 212-219 (CTVCHGEG). Residues 230–250 (RIPPGVDNGSRLRSSGNGEAG) form a disordered region.

Belongs to the DnaJ family. As to quaternary structure, homodimer. Zn(2+) serves as cofactor.

The protein resides in the cytoplasm. Participates actively in the response to hyperosmotic and heat shock by preventing the aggregation of stress-denatured proteins and by disaggregating proteins, also in an autonomous, DnaK-independent fashion. Unfolded proteins bind initially to DnaJ; upon interaction with the DnaJ-bound protein, DnaK hydrolyzes its bound ATP, resulting in the formation of a stable complex. GrpE releases ADP from DnaK; ATP binding to DnaK triggers the release of the substrate protein, thus completing the reaction cycle. Several rounds of ATP-dependent interactions between DnaJ, DnaK and GrpE are required for fully efficient folding. Also involved, together with DnaK and GrpE, in the DNA replication of plasmids through activation of initiation proteins. In Opitutus terrae (strain DSM 11246 / JCM 15787 / PB90-1), this protein is Chaperone protein DnaJ.